The chain runs to 1501 residues: Opaque-specific ABC transporter CDR3 (1501 aa).

Residues 1–502 (MAKTSQAEGQ…KRYWDRMRGD (502 aa)) lie on the Cytoplasmic side of the membrane. The segment at 58–87 (TYTTATMHPNGINPISDKTDPTLDPESPSF) is disordered. An ABC transporter 1 domain is found at 140 to 395 (KYARNIFNKF…FKKMGFVCQD (256 aa)). Residues 503–523 (IIVPLSTVAGNIAMALILSSV) form a helical membrane-spanning segment. N-linked (GlcNAc...) asparagine glycosylation occurs at asparagine 530. 5 helical membrane-spanning segments follow: residues 540-560 (VMYY…YNMY), 589-609 (FPLK…MVNF), 614-634 (GAFF…SHLF), 653-673 (LLLF…YMLG), and 755-775 (FGVL…FVQT). Topologically, residues 776–1175 (NKSSISKGET…LFQQYWRTPS (400 aa)) are cytoplasmic. The ABC transporter 2 domain maps to 840-1083 (FHWRNLTYTV…LIEYFERNGA (244 aa)). 876-883 (GASGAGKT) serves as a coordination point for ATP. 7 helical membrane passes run 1176-1196 (YIYS…FTYY), 1212-1232 (IFSM…LFVT), 1261-1281 (IPYQ…PVGL), 1297-1317 (LMWL…QFCI), 1325-1345 (YAAN…GVIA), 1353-1375 (FWVF…SIGL), and 1451-1471 (GIFI…YWLF).

The protein belongs to the ABC transporter superfamily. ABCG family. PDR (TC 3.A.1.205) subfamily.

Its subcellular location is the membrane. The sequence is that of Opaque-specific ABC transporter CDR3 (CDR3) from Candida albicans (Yeast).